The following is a 361-amino-acid chain: Ataxin-3 (361 aa).

A Peptide (Met-Gly) (interchain with G-Cter in ubiquitin) cross-link involves residue methionine 1. The Josephin domain occupies 1 to 180; the sequence is MESIFHEKQE…DCEADQLLQM (180 aa). Residue cysteine 14 is the Nucleophile of the active site. Histidine 119 (proton acceptor) is an active-site residue. Residue asparagine 134 is part of the active site. Residue lysine 200 forms a Glycyl lysine isopeptide (Lys-Gly) (interchain with G-Cter in ubiquitin) linkage. Phosphoserine is present on serine 219. UIM domains lie at 224–243 and 244–263; these read EDEEDLQRALALSRQEIDME and DEEADLRRAIQLSMQGSSRN. Over residues 258 to 278 the composition is skewed to polar residues; sequence QGSSRNISQDMTQTSGTNLTS. The segment at 258–338 is disordered; sequence QGSSRNISQD…DLGDAMSEED (81 aa). Phosphoserine occurs at positions 265 and 272. Positions 279-293 are enriched in basic and acidic residues; sequence EELRKRREAYFEKQQ. A compositionally biased stretch (low complexity) spans 294-305; the sequence is QKQQQQQQQQQQ. Polar residues predominate over residues 306-325; sequence GDLSGQSSHPCERPATSSGA. Serine 328 is modified (phosphoserine). The UIM 3 domain maps to 331-349; sequence GDAMSEEDMLQAAVTMSLE.

Interacts with STUB1/CHIP (when monoubiquitinated). Interacts with DNA repair proteins RAD23A and RAD23B. Interacts with BECN1 (via its poly-Gln domain). Interacts with PRKN, UBR2, VCP and tubulin. Short isoform 1 interacts with CASP7. Post-translationally, monoubiquitinated N-terminally by UBE2W, possibly leading to activate the deubiquitinating enzyme activity. Ubiquitous.

The protein localises to the nucleus matrix. Its subcellular location is the nucleus. It is found in the lysosome membrane. It carries out the reaction Thiol-dependent hydrolysis of ester, thioester, amide, peptide and isopeptide bonds formed by the C-terminal Gly of ubiquitin (a 76-residue protein attached to proteins as an intracellular targeting signal).. Functionally, deubiquitinating enzyme involved in protein homeostasis maintenance, transcription, cytoskeleton regulation, myogenesis and degradation of misfolded chaperone substrates. Binds long polyubiquitin chains and trims them, while it has weak or no activity against chains of 4 or less ubiquitins. Involved in degradation of misfolded chaperone substrates via its interaction with STUB1/CHIP: recruited to monoubiquitinated STUB1/CHIP, and restricts the length of ubiquitin chain attached to STUB1/CHIP substrates and preventing further chain extension. Interacts with key regulators of transcription and represses transcription: acts as a histone-binding protein that regulates transcription. Acts as a negative regulator of mTORC1 signaling in response to amino acid deprivation by mediating deubiquitination of RHEB, thereby promoting RHEB inactivation by the TSC-TBC complex. Regulates autophagy via the deubiquitination of 'Lys-402' of BECN1 leading to the stabilization of BECN1. The protein is Ataxin-3 of Homo sapiens (Human).